A 296-amino-acid chain; its full sequence is tRNA (guanine(9)-N1)-methyltransferase (296 aa).

The disordered stretch occupies residues 1–33; it reads MTPETNNDETLSRPKPRAALPPVPEGMSKSQWK. An SAM-dependent MTase TRM10-type domain is found at 85–274; it reads TPRVNVNQKD…SVLPARKLAE (190 aa). S-adenosyl-L-methionine-binding positions include 181–182, Gly-201, 205–209, Cys-213, Leu-227, and 239–241; these read LT, DKNRH, and KVL. Asp-205 acts as the Proton acceptor in catalysis. The disordered stretch occupies residues 277–296; it reads DHAQESNSSSPAEEQDAQDI.

Belongs to the class IV-like SAM-binding methyltransferase superfamily. TRM10 family. In terms of assembly, monomer.

The protein resides in the cytoplasm. It is found in the nucleus. It carries out the reaction guanosine(9) in tRNA + S-adenosyl-L-methionine = N(1)-methylguanosine(9) in tRNA + S-adenosyl-L-homocysteine + H(+). S-adenosyl-L-methionine-dependent guanine N(1)-methyltransferase that catalyzes the formation of N(1)-methylguanine at position 9 (m1G9) in cytoplasmic tRNA. The chain is tRNA (guanine(9)-N1)-methyltransferase from Eremothecium gossypii (strain ATCC 10895 / CBS 109.51 / FGSC 9923 / NRRL Y-1056) (Yeast).